We begin with the raw amino-acid sequence, 99 residues long: Class II hydrophobin B (99 aa).

Positions 1 to 15 (MKFFAIAALFAGALA) are cleaved as a signal peptide. Intrachain disulfides connect cysteine 30-cysteine 79 and cysteine 40-cysteine 70.

It belongs to the cerato-ulmin hydrophobin family.

The protein resides in the secreted. Its subcellular location is the cell wall. It is found in the vacuole. The protein localises to the cytoplasmic vesicle. Functionally, aerial growth, conidiation, and dispersal of filamentous fungi in the environment rely upon a capability of their secreting small amphipathic proteins called hydrophobins (HPBs) with low sequence identity. Class I can self-assemble into an outermost layer of rodlet bundles on aerial cell surfaces, conferring cellular hydrophobicity that supports fungal growth, development and dispersal; whereas Class II form highly ordered films at water-air interfaces through intermolecular interactions but contribute nothing to the rodlet structure. Hyd2B contributes to certain cell wall-related features, such as hydrophobicity but is not involved in cell wall-related events during fungal proliferation in host hemocoel. Does not contribute to conidial hydrophobicity. Involved in insect hemocoel colonization independent of cell hydrophobicity. This chain is Class II hydrophobin B, found in Beauveria bassiana (strain ARSEF 2860) (White muscardine disease fungus).